A 109-amino-acid polypeptide reads, in one-letter code: Putative transporter-like protein YIL171W (109 aa).

The segment covering 1-22 (MSGVNNTSANDLSTTESNSNSA) has biased composition (polar residues). The disordered stretch occupies residues 1 to 40 (MSGVNNTSANDLSTTESNSNSAVGAPSVKTEHGDSKDSLN). Residues 1 to 56 (MSGVNNTSANDLSTTESNSNSAVGAPSVKTEHGDSKDSLNLDATEAPIDLPQKPLS) lie on the Cytoplasmic side of the membrane. Over residues 29–39 (KTEHGDSKDSL) the composition is skewed to basic and acidic residues. A helical transmembrane segment spans residues 57-77 (AYTTVAILCLMIAFGGFIFGW). At 78 to 109 (DTGTISGFVNLSDFIRRFGQKKTTRGLTTYRK) the chain is on the extracellular side. Asn-87 carries N-linked (GlcNAc...) asparagine glycosylation.

This sequence belongs to the major facilitator superfamily. Sugar transporter (TC 2.A.1.1) family.

Its subcellular location is the cell membrane. In terms of biological role, probable glucose transporter. The sequence is that of Putative transporter-like protein YIL171W from Saccharomyces cerevisiae (strain ATCC 204508 / S288c) (Baker's yeast).